The primary structure comprises 637 residues: Biosynthetic arginine decarboxylase (637 aa).

Position 101 is an N6-(pyridoxal phosphate)lysine (lysine 101). 286–296 (FDVGGGLAVDY) is a substrate binding site.

The protein belongs to the Orn/Lys/Arg decarboxylase class-II family. SpeA subfamily. Mg(2+) serves as cofactor. Pyridoxal 5'-phosphate is required as a cofactor.

The enzyme catalyses L-arginine + H(+) = agmatine + CO2. It functions in the pathway amine and polyamine biosynthesis; agmatine biosynthesis; agmatine from L-arginine: step 1/1. In terms of biological role, catalyzes the biosynthesis of agmatine from arginine. The sequence is that of Biosynthetic arginine decarboxylase from Shewanella woodyi (strain ATCC 51908 / MS32).